Here is a 639-residue protein sequence, read N- to C-terminus: MKVITSLISSILLKFIHKDFHEIYARMSLLDRFLLLIVHGVDKMVPWHKLPVFLGLTYLEVRRHLHQQYNLLNVGQTPTGIRFDPANYPYRTADGKFNDPFNEGVGSQNSFFGRNCPPVDQKSKLRRPDPMVVATKLLGRKKFIDTGKQFNMIAASWIQFMIHDWIDHLEDTHQIELVAPKEVASKCPLSSFRFLKTKEVPTGFFEIKTGSQNIRTPWWDSSVIYGSNSKTLDRVRTYKDGKLKISEETGLLLHDEDGLAISGDIRNSWAGVSALQALFIKEHNAVCDALKDEDDDLEDEDLYRYARLVTSAVVAKIHTIDWTVQLLKTDTLLAGMRANWYGLLGKKFKDSFGHAGSSILGGVVGMKKPQNHGVPYSLTEDFTSVYRMHSLLPDQLHILDIDDVPGTNKSLPLIQEISMRDLIGRKGEETMSHIGFTKLMVSMGHQASGALELMNYPMWLRDIVPHDPNGQARPDHVDLAALEIYRDRERSVPRYNEFRRSMFMIPITKWEDLTEDEEAIEVLDDVYDGDVEELDLLVGLMAEKKIKGFAISETAFYIFLIMATRRLEADRFFTSDFNETIYTKKGLEWVNTTESLKDVIDRHYPDMTDKWMNSESAFSVWDSPPLTKNPIPLYLRIPS.

The active-site Proton acceptor is the His-163. A Ca(2+)-binding site is contributed by Asp-164. His-168 is a binding site for heme b. Ca(2+) contacts are provided by Thr-216, Trp-218, Asp-220, and Ser-222. Residues His-389, Arg-486, and Arg-490 each coordinate heme b.

This sequence belongs to the peroxidase family. In terms of assembly, forms monomers in solution. Heme b serves as cofactor. It depends on Ca(2+) as a cofactor. In terms of tissue distribution, expressed in roots (epiderm), mature flowers (e.g. anthers) and senescing leaves.

It is found in the lipid droplet. The catalysed reaction is a 1,2-saturated fatty acid + O2 = a (2R)-2-hydroperoxy fatty acid. It catalyses the reaction (9Z,12Z,15Z)-octadecatrienoate + O2 = (R)-2-hydroperoxy-(9Z,12Z,15Z)-octadecatrienoate. It carries out the reaction hexadecanoate + O2 = (2R)-2-hydroperoxyhexadecanoate. The enzyme catalyses (9Z,12Z)-octadecadienoate + O2 = (2R,9Z,12Z)-2-hydroperoxyoctadecadienoate. The catalysed reaction is (9Z)-octadecenoate + O2 = (2R,9Z)-2-hydroperoxyoctadecenoate. Alpha-dioxygenase that catalyzes the primary oxygenation step of a variety of 14-20 carbon fatty acids, containing up to three unsaturated bonds, into their corresponding 2R-hydroperoxides. Involved in the production of oxylipins that function in cell signaling, wound healing, and protection from infection. Mediates protection against oxidative stress and cell death, probably by generating some lipid-derived molecules. Promotes local and systemic plant defense in a salicylic acid (SA)-dependent manner, including the establishment of systemic acquired resistance (SAR) in response to incompatible interaction. Involved in a negative regulation of abscisic acid (ABA)-mediated signaling pathway. The sequence is that of Alpha-dioxygenase 1 from Arabidopsis thaliana (Mouse-ear cress).